Reading from the N-terminus, the 439-residue chain is Kinesin-like protein KIN-13 (439 aa).

Position 1-5 (1-5 (GSGKS)) interacts with ATP. The Kinesin motor domain occupies 1–240 (GSGKSFTMMH…LRYADRVKEL (240 aa)).

This sequence belongs to the TRAFAC class myosin-kinesin ATPase superfamily. Kinesin family. KIN-13 subfamily. Interacts with PLK. Phosphorylated by PLK.

The protein localises to the cytoplasm. Its subcellular location is the cytoskeleton. It is found in the cell projection. The protein resides in the cilium. It localises to the flagellum. The protein localises to the flagellum basal body. Its subcellular location is the flagellum axoneme. It is found in the spindle. The protein resides in the chromosome. It localises to the centromere. The protein localises to the kinetochore. Involved in cell cycle. Involved in formation of flagella, regulation of flagellar length, and formation of median bodies during interphase. Regulates flagellar length in all eight distal flagellar tips by promoting disassembly of the microtubules. Disassembles microtubules at the distal flagellar tips in a length-dependent manner in order to maintain different equilibrium lengths of the four flagellar pairs. Regulates interphase and mitotic microtubule dynamics. Regulates microtubule disassembly dynamics of the dual mitotic spindles and the median body. The polypeptide is Kinesin-like protein KIN-13 (Giardia intestinalis (Giardia lamblia)).